The chain runs to 388 residues: Nesprin-4 (388 aa).

Over 1 to 339 (MALVPPLGRE…GVPAPASKRP (339 aa)) the chain is Cytoplasmic. The tract at residues 60–92 (ELKSTESATSPSRLPLASSHEHQDGGKPCEHSD) is disordered. Residues 78–92 (SHEHQDGGKPCEHSD) are compositionally biased toward basic and acidic residues. Positions 331-388 (VPAPASKRPLTLFFLLLFLLLVGATLLLPLSGVSCCSHARLARTPYLVLSYVNGLPPI) constitute a KASH domain. Residues 340 to 360 (LTLFFLLLFLLLVGATLLLPL) form a helical; Anchor for type IV membrane protein membrane-spanning segment. At 361-388 (SGVSCCSHARLARTPYLVLSYVNGLPPI) the chain is on the perinuclear space side.

Belongs to the nesprin family. In terms of assembly, core component of LINC complexes which are composed of inner nuclear membrane SUN domain-containing proteins coupled to outer nuclear membrane KASH domain-containing nesprins. SUN and KASH domain-containing proteins seem to bind each other promiscuously; however, differentially expression of LINC complex constituents can give rise to specific assemblies. Probably part of a SUN1-containing LINC complex. Interacts with kinesins KIF5B and KLC1. The disulfid bond with SUN1 or SUN2 is required for stability of the respective LINC complex under tensile forces. Expressed in secretory epithelial cells, such as those found in exocrine pancreas, bulbourethral gland, mammary gland and salivary gland (at protein level). Also expressed in the cochlea, where it is restricted primarily to the 3 rows of outer hair cells and 1 row of inner hair cells (at protein level). Not detected in other cells of the cochlea, including Deiter's cells and pillar cells, nor in liver and kidney (at protein level).

The protein localises to the nucleus outer membrane. As a component of the LINC (LInker of Nucleoskeleton and Cytoskeleton) complex, involved in the connection between the nuclear lamina and the cytoskeleton. The nucleocytoplasmic interactions established by the LINC complex play an important role in the transmission of mechanical forces across the nuclear envelope and in nuclear movement and positioning. Behaves as a kinesin cargo, providing a functional binding site for kinesin-1 at the nuclear envelope. Hence may contribute to the establishment of secretory epithelial morphology, by promoting kinesin-dependent apical migration of the centrosome and Golgi apparatus and basal localization of the nucleus. The protein is Nesprin-4 (Syne4) of Mus musculus (Mouse).